Consider the following 313-residue polypeptide: Protein-methionine-sulfoxide reductase catalytic subunit MsrP (313 aa).

The tat-type signal signal peptide spans 1–45; sequence MPAYRPPHIASSEITPKSFYLSRRNFLGTAAGLAAIGLAGREAIA. Residues Asn71, 74–75, Cys128, Thr163, Asn213, Arg218, and 229–231 contribute to the Mo-molybdopterin site; these read YE and GIK.

The protein belongs to the MsrP family. As to quaternary structure, heterodimer of a catalytic subunit (MsrP) and a heme-binding subunit (MsrQ). Requires Mo-molybdopterin as cofactor. Post-translationally, predicted to be exported by the Tat system. The position of the signal peptide cleavage has not been experimentally proven.

It is found in the periplasm. The catalysed reaction is L-methionyl-[protein] + a quinone + H2O = L-methionyl-(S)-S-oxide-[protein] + a quinol. The enzyme catalyses L-methionyl-[protein] + a quinone + H2O = L-methionyl-(R)-S-oxide-[protein] + a quinol. Part of the MsrPQ system that repairs oxidized periplasmic proteins containing methionine sulfoxide residues (Met-O), using respiratory chain electrons. Thus protects these proteins from oxidative-stress damage caused by reactive species of oxygen and chlorine generated by the host defense mechanisms. MsrPQ is essential for the maintenance of envelope integrity under bleach stress, rescuing a wide series of structurally unrelated periplasmic proteins from methionine oxidation. The catalytic subunit MsrP is non-stereospecific, being able to reduce both (R-) and (S-) diastereoisomers of methionine sulfoxide. The chain is Protein-methionine-sulfoxide reductase catalytic subunit MsrP from Agrobacterium fabrum (strain C58 / ATCC 33970) (Agrobacterium tumefaciens (strain C58)).